Here is a 790-residue protein sequence, read N- to C-terminus: Protein SEY1 (790 aa).

Residues 1–692 (MELSEGELSH…KRSIVQHITQ (692 aa)) lie on the Cytoplasmic side of the membrane. Residues 55–284 (GNNYHIISVF…VSNELFKPEY (230 aa)) form the GB1/RHD3-type G domain. 65 to 72 (GSQSTGKS) contributes to the GTP binding site. A helical membrane pass occupies residues 693–713 (IPYYIYLIILVLGWNEFMAII). Residues 714–716 (RNP) are Lumenal-facing. A helical transmembrane segment spans residues 717–737 (LFFSLSIVLGATVYVLYYLGL). Residues 738 to 790 (LRPALVVAQRTMDEVIVMAKTKLREVLIDDHEVTGRQLNKMAGSKENIELDDM) lie on the Cytoplasmic side of the membrane.

Belongs to the TRAFAC class dynamin-like GTPase superfamily. GB1/RHD3 GTPase family. RHD3 subfamily.

It localises to the endoplasmic reticulum membrane. Functionally, cooperates with the reticulon proteins and tubule-shaping DP1 family proteins to generate and maintain the structure of the tubular endoplasmic reticulum network. Has GTPase activity, which is required for its function in ER organization. Required for virulence and resistance to cycloheximide. The chain is Protein SEY1 from Candida albicans (strain SC5314 / ATCC MYA-2876) (Yeast).